Consider the following 558-residue polypeptide: Atlastin-1 (558 aa).

Residues 1–29 (MAKSRRDRNSWGGFSEKSSDWSSEEEEPV) form a disordered region. Residues 1 to 34 (MAKSRRDRNSWGGFSEKSSDWSSEEEEPVRKAGP) are N-terminal hypervariable region (HVR). The Cytoplasmic segment spans residues 1–449 (MAKSRRDRNS…NIFHAARTPA (449 aa)). Ser-10, Ser-22, and Ser-23 each carry phosphoserine. The GB1/RHD3-type G domain maps to 64 to 309 (DKEVVAVSVA…LIPWLLSPES (246 aa)). GDP is bound by residues Arg-77, Lys-78, Gly-79, Lys-80, Ser-81, Phe-82, Gln-148, Arg-217, Asp-218, Val-276, and Asn-279. 6 residues coordinate GTP: Arg-77, Lys-78, Gly-79, Lys-80, Ser-81, and Phe-82. Residue Ser-81 coordinates Mg(2+). Residues Arg-217, Asp-218, and Val-276 each contribute to the GTP site. The segment at 347–438 (MLQATAEANN…YIQYIKHNDS (92 aa)) is 3HB (three-helix bundle) domain. Lys-395 bears the N6-acetyllysine mark. The stretch at 412–439 (EFSRRYLQQLESEIDELYIQYIKHNDSK) forms a coiled coil. The tract at residues 439–447 (KNIFHAART) is linker. A helical membrane pass occupies residues 450-470 (TLFVVIFITYVIAGVTGFIGL). Residue Asp-471 is a topological domain, lumenal. The helical transmembrane segment at 472–492 (IIASLCNMIMGLTLITLCTWA) threads the bilayer. The Cytoplasmic portion of the chain corresponds to 493 to 558 (YIRYSGEYRE…PTEQPEKKKI (66 aa)). The autoinhibitory domain stretch occupies residues 521–558 (NEALYKLYSAAATHRHLYQQAFPAPKSEPTEQPEKKKI).

It belongs to the TRAFAC class dynamin-like GTPase superfamily. GB1/RHD3 GTPase family. GB1 subfamily. Monomeric and homodimeric. The homodimer, transiently formed by two molecules on opposing membranes, is the active form mediating ER membrane fusion. Interacts with REEP1, REEP5, RTN3 and RTN4 (via the transmembrane region); these proteins are involved in endoplasmic reticulum tubular network organization. Interacts with ZFYVE27; both proteins are involved in endoplasmic reticulum tubular network organization. Interacts with ARL6IP1; both proteins are involved in endoplasmic reticulum tubular network organization. Interacts with SPAST; the interaction is direct, could recruit SPAST to Golgi membranes. Interacts (via N-terminal region) with MAP4K4 (via CNH regulatory domain). May interact with TMED2. Interacts with CPT1C. Post-translationally, phosphorylated. Phosphorylation, by different kinases, of the N-terminal hypervariable region (HVR) regulates the ATL1-mediated membrane tethering step. In terms of tissue distribution, detected in brain where it is abundant in lamina V of the cerebral cortex. Also expressed within the hippocampus, mainly in pyramidal neurons in CA1 and CA3. Weakly expressed in the striatum and more robustly in amygdala and several thalamic nuclei. Also detected in several mesopontine nuclei (at protein level).

The protein resides in the endoplasmic reticulum membrane. The protein localises to the golgi apparatus membrane. It localises to the cell projection. It is found in the axon. The catalysed reaction is GTP + H2O = GDP + phosphate + H(+). Its function is as follows. Atlastin-1 (ATL1) is a membrane-anchored GTPase that mediates the GTP-dependent fusion of endoplasmic reticulum (ER) membranes, maintaining the continuous ER network. It facilitates the formation of three-way junctions where ER tubules intersect. Two atlastin-1 on neighboring ER tubules bind GTP and form loose homodimers through the GB1/RHD3-type G domains and 3HB regions. Upon GTP hydrolysis, the 3HB regions tighten, pulling the membranes together to drive their fusion. After fusion, the homodimer disassembles upon release of inorganic phosphate (Pi). Subsequently, GDP dissociates, resetting the monomers to a conformation ready for a new fusion cycle. May also regulate more or less directly Golgi biogenesis. Indirectly regulates axonal development. This Rattus norvegicus (Rat) protein is Atlastin-1.